Here is a 305-residue protein sequence, read N- to C-terminus: Sulfate adenylyltransferase subunit 2 (305 aa).

Belongs to the PAPS reductase family. CysD subfamily. In terms of assembly, heterodimer composed of CysD, the smaller subunit, and CysN.

The catalysed reaction is sulfate + ATP + H(+) = adenosine 5'-phosphosulfate + diphosphate. It functions in the pathway sulfur metabolism; hydrogen sulfide biosynthesis; sulfite from sulfate: step 1/3. In terms of biological role, with CysN forms the ATP sulfurylase (ATPS) that catalyzes the adenylation of sulfate producing adenosine 5'-phosphosulfate (APS) and diphosphate, the first enzymatic step in sulfur assimilation pathway. APS synthesis involves the formation of a high-energy phosphoric-sulfuric acid anhydride bond driven by GTP hydrolysis by CysN coupled to ATP hydrolysis by CysD. This Pseudomonas fluorescens (strain ATCC BAA-477 / NRRL B-23932 / Pf-5) protein is Sulfate adenylyltransferase subunit 2.